The chain runs to 110 residues: UPF0060 membrane protein Ping_0587 (110 aa).

The next 4 helical transmembrane spans lie at 6–26 (IFGI…LPYL), 33–53 (SIWL…LLTL), 61–81 (TYAA…WLVE), and 87–107 (MTDL…MFGP).

Belongs to the UPF0060 family.

It is found in the cell inner membrane. This is UPF0060 membrane protein Ping_0587 from Psychromonas ingrahamii (strain DSM 17664 / CCUG 51855 / 37).